The chain runs to 156 residues: Myosin regulatory light chain B, smooth adductor muscle (156 aa).

Residue Ala1 is modified to Blocked amino end (Ala). EF-hand domains follow at residues 15–50 (KQIQ…LGRT) and 84–119 (DTEE…MGDN). The Ca(2+) site is built by Asp28, Asn30, Asp32, and Asp39.

Its function is as follows. In molluscan muscle, calcium regulation is associated with myosin rather than with actin. Muscle myosin contains two types of light chains: the catalytic light chain, essential for ATPase activity, and the regulatory light chain, a calcium-binding protein responsible for Ca(2+) dependent binding and Ca(2+) dependent Mg-ATPase activity. The protein is Myosin regulatory light chain B, smooth adductor muscle of Mizuhopecten yessoensis (Japanese scallop).